Here is a 257-residue protein sequence, read N- to C-terminus: Anamorsin homolog (257 aa).

Residues 1–134 (MSDRKNVLFV…KVGSSDKVTL (134 aa)) form an N-terminal SAM-like domain region. The segment at 135–168 (NPEMKENVVSAWKLDDNNSETISEDDLLEADDLI) is linker. 4 residues coordinate [2Fe-2S] cluster: Cys-178, Cys-187, Cys-190, and Cys-192. Residues 178–192 (CATTKKAKACKDCSC) form a fe-S binding site A region. The [4Fe-4S] cluster site is built by Cys-218, Cys-221, Cys-229, and Cys-232. 2 short sequence motifs (cx2C motif) span residues 218-221 (CGSC) and 229-232 (CASC). Residues 218–232 (CGSCYLGDAFRCASC) form a fe-S binding site B region.

This sequence belongs to the anamorsin family. As to quaternary structure, monomer. [2Fe-2S] cluster is required as a cofactor. The cofactor is [4Fe-4S] cluster.

The protein resides in the cytoplasm. Its subcellular location is the mitochondrion intermembrane space. In terms of biological role, component of the cytosolic iron-sulfur (Fe-S) protein assembly (CIA) machinery. Required for the maturation of extramitochondrial Fe-S proteins. Part of an electron transfer chain functioning in an early step of cytosolic Fe-S biogenesis, facilitating the de novo assembly of a [4Fe-4S] cluster on the cytosolic Fe-S scaffold complex. Electrons are transferred from NADPH via a FAD- and FMN-containing diflavin oxidoreductase. Together with the diflavin oxidoreductase, also required for the assembly of the diferric tyrosyl radical cofactor of ribonucleotide reductase (RNR), probably by providing electrons for reduction during radical cofactor maturation in the catalytic small subunit. This Acyrthosiphon pisum (Pea aphid) protein is Anamorsin homolog.